Consider the following 203-residue polypeptide: Large ribosomal subunit protein uL18 (203 aa).

Belongs to the universal ribosomal protein uL18 family. Part of the 50S ribosomal subunit. Contacts the 5S and 23S rRNAs.

Functionally, this is one of the proteins that bind and probably mediate the attachment of the 5S RNA into the large ribosomal subunit, where it forms part of the central protuberance. The sequence is that of Large ribosomal subunit protein uL18 from Pyrococcus abyssi (strain GE5 / Orsay).